A 179-amino-acid polypeptide reads, in one-letter code: Large ribosomal subunit protein uL6 (179 aa).

The span at glutamate 154 to arginine 169 shows a compositional bias: basic and acidic residues. Residues glutamate 154–lysine 179 are disordered. Positions arginine 170–lysine 179 are enriched in basic residues.

It belongs to the universal ribosomal protein uL6 family. In terms of assembly, part of the 50S ribosomal subunit.

This protein binds to the 23S rRNA, and is important in its secondary structure. It is located near the subunit interface in the base of the L7/L12 stalk, and near the tRNA binding site of the peptidyltransferase center. The sequence is that of Large ribosomal subunit protein uL6 from Oleidesulfovibrio alaskensis (strain ATCC BAA-1058 / DSM 17464 / G20) (Desulfovibrio alaskensis).